The primary structure comprises 92 residues: Small ribosomal subunit protein uS19 (92 aa).

It belongs to the universal ribosomal protein uS19 family.

In terms of biological role, protein S19 forms a complex with S13 that binds strongly to the 16S ribosomal RNA. This Crocosphaera subtropica (strain ATCC 51142 / BH68) (Cyanothece sp. (strain ATCC 51142)) protein is Small ribosomal subunit protein uS19.